The primary structure comprises 278 residues: DNA oxidative demethylase ALKBH2 (278 aa).

The segment at 1–49 (MDRFLVKGAVGSLKRRMEQEQTGGGPAGLAEEEGNSKKNPRRAAPGNGV) is disordered. The short motif at 3 to 7 (RFLVK) is the PCNA-binding element. Residues 101-103 (FGK) and 121-123 (YTF) each bind substrate. The Fe2OG dioxygenase domain occupies 151–256 (TFNFVLINRY…RVNLTFRKIL (106 aa)). Positions 158, 160, and 170 each coordinate 2-oxoglutarate. The Fe cation site is built by histidine 170 and aspartate 172. Residue aspartate 173 participates in substrate binding. Histidine 235, arginine 247, threonine 251, and arginine 253 together coordinate 2-oxoglutarate. Residue histidine 235 participates in Fe cation binding.

It belongs to the alkB family. As to quaternary structure, interacts with PCNA homotrimer; this interaction is enhanced during the S-phase of the cell cycle. Interacts with nucleolar proteins NCL, UBTF and NPM1. Interacts with XRCC5-XRCC6 heterodimer. Fe(2+) serves as cofactor.

The protein localises to the nucleus. It is found in the nucleolus. It localises to the nucleoplasm. It carries out the reaction a methylated nucleobase within DNA + 2-oxoglutarate + O2 = a nucleobase within DNA + formaldehyde + succinate + CO2. It catalyses the reaction an N(1)-methyl-2'-deoxyadenosine in double-stranded DNA + 2-oxoglutarate + O2 = a 2'-deoxyadenosine in double-stranded DNA + formaldehyde + succinate + CO2 + H(+). The enzyme catalyses an N(1)-methyl-2'-deoxyadenosine in single-stranded DNA + 2-oxoglutarate + O2 = a 2'-deoxyadenosine in single-stranded DNA + formaldehyde + succinate + CO2 + H(+). The catalysed reaction is an N(3)-methyl-2'-deoxycytidine in double-stranded DNA + 2-oxoglutarate + O2 = a 2'-deoxycytidine in double-stranded DNA + formaldehyde + succinate + CO2 + H(+). It carries out the reaction an N(3)-methyl-2'-deoxycytidine in single-stranded DNA + 2-oxoglutarate + O2 = a 2'-deoxycytidine in single-stranded DNA + formaldehyde + succinate + CO2 + H(+). It catalyses the reaction a 1,N(6)-etheno-2'-deoxyadenosine in double-stranded DNA + 2-oxoglutarate + O2 + H2O = a 2'-deoxyadenosine in double-stranded DNA + glyoxal + succinate + CO2. The enzyme catalyses a 1,N(6)-etheno-2'-deoxyadenosine in single-stranded DNA + 2-oxoglutarate + O2 + H2O = a 2'-deoxyadenosine in single-stranded DNA + glyoxal + succinate + CO2. The catalysed reaction is a 3,N(4)-etheno-2'-deoxycytidine in double-stranded DNA + 2-oxoglutarate + O2 + H2O = a 2'-deoxycytidine in double-stranded DNA + glyoxal + succinate + CO2. It carries out the reaction a 3,N(4)-etheno-2'-deoxycytidine in single-stranded DNA + 2-oxoglutarate + O2 + H2O = a 2'-deoxycytidine in single-stranded DNA + glyoxal + succinate + CO2. It catalyses the reaction a 1,N(2)-etheno-2'-deoxyguanosine in double-stranded DNA + 2-oxoglutarate + O2 + H2O = a 2'-deoxyguanosine in double-stranded DNA + glyoxal + succinate + CO2. Its activity is regulated as follows. Activated by ascorbate and magnesium ions. In terms of biological role, dioxygenase that repairs alkylated nucleic acid bases by direct reversal oxidative dealkylation. Can process both double-stranded (ds) and single-stranded (ss) DNA substrates, with a strong preference for dsDNA. Uses molecular oxygen, 2-oxoglutarate and iron as cofactors to oxidize the alkyl groups that are subsequently released as aldehydes, regenerating the undamaged bases. Probes the base pair stability, locates a weakened base pair and flips the damaged base to accommodate the lesion in its active site for efficient catalysis. Repairs monoalkylated bases, specifically N1-methyladenine and N3-methylcytosine, as well as higher order alkyl adducts such as bases modified with exocyclic bridged adducts known as etheno adducts including 1,N6-ethenoadenine, 3,N4-ethenocytosine and 1,N2-ethenoguanine. Acts as a gatekeeper of genomic integrity under alkylation stress. Efficiently repairs alkylated lesions in ribosomal DNA (rDNA). These lesions can cause ss- and dsDNA strand breaks that severely impair rDNA transcription. In a response mechanism to DNA damage, associates with PCNA at replication forks to repair alkylated adducts prior to replication. This is DNA oxidative demethylase ALKBH2 (ALKBH2) from Bos taurus (Bovine).